The chain runs to 886 residues: Microsomal triglyceride transfer protein (886 aa).

The N-terminal stretch at 1–24 (MLRLAGLLLCVTSFLSTSSLGANA) is a signal peptide. Positions 28–662 (LDNDRLYRYS…QSNNALLHGL (635 aa)) constitute a Vitellogenin domain. Cystine bridges form between Cys174-Cys194 and Cys440-Cys445.

In terms of assembly, heterodimer; heterodimerizes with the protein disulfide isomerase. Interacts with apolipoprotein B.

It is found in the endoplasmic reticulum. Its function is as follows. Catalyzes the transport of triglyceride, cholesteryl ester, and phospholipid between phospholipid surfaces. Required for the secretion of plasma lipoproteins that contain apolipoprotein B. The protein is Microsomal triglyceride transfer protein of Megalobrama amblycephala (Chinese blunt snout bream).